The sequence spans 623 residues: tRNA uridine 5-carboxymethylaminomethyl modification enzyme MnmG (623 aa).

12 to 17 (GAGHAG) provides a ligand contact to FAD. 272–286 (GPRYCPSIEDKINRF) contributes to the NAD(+) binding site.

The protein belongs to the MnmG family. Homodimer. Heterotetramer of two MnmE and two MnmG subunits. FAD is required as a cofactor.

The protein localises to the cytoplasm. In terms of biological role, NAD-binding protein involved in the addition of a carboxymethylaminomethyl (cmnm) group at the wobble position (U34) of certain tRNAs, forming tRNA-cmnm(5)s(2)U34. The polypeptide is tRNA uridine 5-carboxymethylaminomethyl modification enzyme MnmG (Christiangramia forsetii (strain DSM 17595 / CGMCC 1.15422 / KT0803) (Gramella forsetii)).